We begin with the raw amino-acid sequence, 187 residues long: KS71A fimbrillin (187 aa).

The signal sequence occupies residues 1 to 21 (MIKSVIAGAVAMAVVSFGANA). Residues cysteine 43 and cysteine 82 are joined by a disulfide bond.

The protein belongs to the fimbrial protein family.

It is found in the fimbrium. Fimbriae (also called pili), polar filaments radiating from the surface of the bacterium to a length of 0.5-1.5 micrometers and numbering 100-300 per cell, enable bacteria to colonize the epithelium of specific host organs. The sequence is that of KS71A fimbrillin (KS71A) from Escherichia coli.